The following is a 994-amino-acid chain: Seizure protein 6 homolog (994 aa).

Positions 1–19 are cleaved as a signal peptide; it reads MRPVALLLLPSLLALLAHG. The Extracellular segment spans residues 20-925; it reads LSLEAPTVGK…AASSTLDAAH (906 aa). The segment at 28–50 is disordered; sequence GKGQAPGIEETDGELTAAPTPEQ. 2 O-glycosylated at two sites regions span residues 38–47 and 59–63; these read TDGELTAAPT and TTAPT. Disordered stretches follow at residues 88–146, 171–191, and 241–261; these read LRPA…ESES, IAST…PGDM, and PGPC…PTDL. Pro residues predominate over residues 93 to 107; that stretch reads PFQPDPPAPFTPSPL. 2 stretches are compositionally biased toward polar residues: residues 112-123 and 172-185; these read NQDSRPVFTSPT and ASTT…TPTQ. A glycan (N-linked (GlcNAc...) asparagine) is linked at Asn289. Residues 355–414 enclose the Sushi 1 domain; sequence LSCHFPRRPAYGDVTVTSLHPGGSARFHCATGYQLKGARHLTCLNATQPFWDSKEPVCIA. Disulfide bonds link Cys357–Cys397, Cys383–Cys412, Cys416–Cys443, Cys532–Cys574, Cys559–Cys589, Cys593–Cys619, Cys710–Cys752, Cys738–Cys765, Cys771–Cys813, Cys799–Cys830, Cys838–Cys880, and Cys866–Cys895. N-linked (GlcNAc...) asparagine glycans are attached at residues Asn399, Asn436, and Asn541. Positions 416-527 constitute a CUB 1 domain; that stretch reads CGGVIRNATT…AGMALRYEAF (112 aa). Positions 530 to 591 constitute a Sushi 2 domain; the sequence is GHCYEPFVKY…WNETEPACRA (62 aa). The region spanning 593–704 is the CUB 2 domain; it reads CSGEITDSAG…QGFVIHFFEV (112 aa). Sushi domains follow at residues 708-767, 769-832, and 836-897; these read DTCP…SCQR, TSCH…KCLL, and KPCH…ICRA. A helical membrane pass occupies residues 926 to 946; that stretch reads IAAAIFLPLVAMVLLVGGVYF. Over 947–994 the chain is Cytoplasmic; that stretch reads YFSRLQGKSSLQLPRPRPRPYNRITIESAFDNPTYETGSLSFAGDERI.

The protein belongs to the SEZ6 family. Glycosylated.

Its subcellular location is the cell membrane. In terms of biological role, may play a role in cell-cell recognition and in neuronal membrane signaling. Seems to be important for the achievement of the necessary balance between dendrite elongation and branching during the elaboration of a complex dendritic arbor. Involved in the development of appropriate excitatory synaptic connectivity. The polypeptide is Seizure protein 6 homolog (SEZ6) (Homo sapiens (Human)).